Here is a 206-residue protein sequence, read N- to C-terminus: Thymidylate kinase (206 aa).

10 to 17 (GNDGSGKS) contacts ATP.

It belongs to the thymidylate kinase family.

It carries out the reaction dTMP + ATP = dTDP + ADP. In terms of biological role, phosphorylation of dTMP to form dTDP in both de novo and salvage pathways of dTTP synthesis. The chain is Thymidylate kinase from Caldicellulosiruptor saccharolyticus (strain ATCC 43494 / DSM 8903 / Tp8T 6331).